The chain runs to 210 residues: Dephospho-CoA kinase (210 aa).

A DPCK domain is found at 18 to 210 (RIGITGGIAS…LSYPQVEVLL (193 aa)). Residue 26-31 (ASGKTS) coordinates ATP.

It belongs to the CoaE family.

It localises to the cytoplasm. The catalysed reaction is 3'-dephospho-CoA + ATP = ADP + CoA + H(+). The protein operates within cofactor biosynthesis; coenzyme A biosynthesis; CoA from (R)-pantothenate: step 5/5. Catalyzes the phosphorylation of the 3'-hydroxyl group of dephosphocoenzyme A to form coenzyme A. In Prochlorococcus marinus (strain SARG / CCMP1375 / SS120), this protein is Dephospho-CoA kinase.